Consider the following 556-residue polypeptide: MSVTGNFFSKLRSLALTLEKETAQLEQVFGNEDNEYEEESPMRVLHDLRSDIMVLKGDFQSTLDKKLTRGQELSAFIKACRVLHERSAADIEQIKETFQTYGYKPLCNDNSENEQTQESEKPKDNDVSPRKADAEDLPILEKAASTSWDLLRAPQLSDFGLSHYQLPTAWEPPKVKPCPKNPEEEKPRIMYKDPEPINVAKTPKCALRLEEDFSQIQHFGISDCSTNLNDDYTIALINKNFQKKQNDTENETCQAKNLKSLLATPSHLSHRMDCVDSPLPPVFFTPGLKVHKKETISLPGKTGERQGLNAADTDSTLLSGTCDRKDSDNAHLEDVHECTAMKPAMDLKSISAAPPYLSLGSNFDSVYSPRPPVFCTPGLKTHKKETSSVLVEPKEVTGCSDTPPLPSFQTNWLKNDTTEKALDITEPVPRPELSYRQYLEEPPSLVLNSNKYEAPAMTEYDIGTPTRPEMTVSLTEDLFKYNVKPSSPPKMSEYEKMLWTPIRPEMTSCITEDISQILSKYCDNNTNVADKEMWNKAGASFGKISSEYEDKENRQY.

The tract at residues 105-135 (PLCNDNSENEQTQESEKPKDNDVSPRKADAE) is disordered. Basic and acidic residues predominate over residues 118–134 (ESEKPKDNDVSPRKADA).

The protein belongs to the SKA3 family. Component of the SKA complex, composed of ska1, ska2 and ska3.

It localises to the cytoplasm. The protein resides in the cytoskeleton. Its subcellular location is the spindle. The protein localises to the chromosome. It is found in the centromere. It localises to the kinetochore. Its function is as follows. Component of the SKA complex, a microtubule plus end-binding complex of the outer kinetochore that stabilizes spindle microtubule-kinetochore attachments, promotes alignment of chromosomes at the mitotic spindle equator (chromosome congression) and assists suppression of the spindle assembly checkpoint. Kinetochores, consisting of a centromere-associated inner segment and a microtubule-contacting outer segment, play a crucial role in chromosome segregation by mediating the physical connection between centromeric DNA and spindle microtubules. The outer kinetochore is made up of the ten-subunit KMN network complex, comprising the MIS12, NDC80 and KNL1 complexes, and auxiliary microtubule-associated components such as the SKA complex; together they connect the outer kinetochore with the inner kinetochore, bind microtubules, and mediate interactions with mitotic checkpoint proteins that delay anaphase until chromosomes are bioriented on the spindle. The SKA complex is loaded onto bioriented kinetochores and it facilitates chromosome congression by stabilizing microtubules, and end-on attachment of the NDC80 complex to depolymerizing spindle microtubules, thereby assisting the poleward-moving kinetochore in withstanding microtubule pulling forces. The complex associates with dynamic microtubule plus-ends and can track both depolymerizing and elongating microtubules. The complex recruits protein phosphatase 1 (PP1) to the kinetochore in prometaphase and metaphase, to oppose spindle assembly checkpoint signaling and promote the onset of anaphase. Within the complex, binds microtubules but with a much lower affinity than SKA1. During meiosis the SKA complex stabilizes the meiotic spindle and is required for its migration to the cortex. In Xenopus laevis (African clawed frog), this protein is SKA complex subunit 3 (ska3).